The following is an 88-amino-acid chain: Long neurotoxin LNTX-2 (88 aa).

Positions 1 to 21 are cleaved as a signal peptide; sequence MKTLLLTLVVVTIVCLDFGYA. Cystine bridges form between cysteine 24-cysteine 42, cysteine 35-cysteine 63, cysteine 67-cysteine 78, and cysteine 79-cysteine 84.

This sequence belongs to the three-finger toxin family. Long-chain subfamily. Type II alpha-neurotoxin sub-subfamily. In terms of tissue distribution, expressed by the venom gland.

Its subcellular location is the secreted. Functionally, binds with high affinity to muscular nicotinic acetylcholine receptors (nAChRs), whereas it binds with a low affinity to neuronal alpha-7/CHRNA7 nAChRs. The sequence is that of Long neurotoxin LNTX-2 from Demansia vestigiata (Lesser black whip snake).